Reading from the N-terminus, the 1544-residue chain is Lysine-specific demethylase 5B (1544 aa).

The segment covering 1–14 (MEPATTLPPGPRPA) has biased composition (pro residues). Positions 1-22 (MEPATTLPPGPRPALPLGGPGP) are disordered. Positions 32–73 (CPVFEPSWEEFADPFAFIHKIRPIAEQTGICKVRPPPDWQPP) constitute a JmjN domain. The 91-residue stretch at 97–187 (TRVKLNFLDQ…ILNPYNLFLS (91 aa)) folds into the ARID domain. Glycyl lysine isopeptide (Lys-Gly) (interchain with G-Cter in SUMO2) cross-links involve residues Lys148, Lys204, Lys209, Lys242, Lys274, and Lys278. Residues 200–228 (TSDTKDKEYKPHDIPQRQSVQPAETCPPA) are disordered. Positions 202-214 (DTKDKEYKPHDIP) are enriched in basic and acidic residues. The segment at 269 to 297 (NEKEMKSTIKQEPTEKKDCELESEKEKPK) is disordered. A PHD-type 1 zinc finger spans residues 309–359 (LYVCLLCGSGNDEDRLLLCDGCDDSYHTFCLVPPLHDVPKGDWRCPKCLAQ). Tyr425 serves as a coordination point for 2-oxoglutarate. In terms of domain architecture, JmjC spans 453–619 (EYLDSGWNLN…LGRQCVEHYR (167 aa)). Residues His499 and Glu501 each coordinate Fe cation. The 2-oxoglutarate site is built by Ser507, Asn509, and Lys517. His587 lines the Fe cation pocket. A C5HC2 zinc finger spans residues 692-744 (CIKCKTTCFMSAISCSCKPGLLVCLHHVKELCSCPPYKYNLRYRYTLDDLYPM). Lys769 participates in a covalent cross-link: Glycyl lysine isopeptide (Lys-Gly) (interchain with G-Cter in SUMO2). At Lys832 the chain carries N6-acetyllysine. Ser986 is subject to Phosphoserine. The PHD-type 2 zinc finger occupies 1176-1224 (MKVCLCQKTPATPMIQCELCRDAFHTSCVAAPSISQSSRIWLCPHCRRS). Residues 1297 to 1314 (QASATDKVSQPPGTTSFS) are compositionally biased toward polar residues. The disordered stretch occupies residues 1297–1318 (QASATDKVSQPPGTTSFSLPDD). Position 1328 is a phosphoserine (Ser1328). A compositionally biased stretch (polar residues) spans 1374-1388 (PSSVQQADRSSPVRS). Residues 1374 to 1447 (PSSVQQADRS…IKLSHPKDMD (74 aa)) are disordered. Residues 1389 to 1427 (SSEKNDCLRGKRDAINSPERKLKRRPEREGLPSERWDRV) show a composition bias toward basic and acidic residues. The span at 1428 to 1441 (KHMRTPQKKKIKLS) shows a compositional bias: basic residues. Lys1450 participates in a covalent cross-link: Glycyl lysine isopeptide (Lys-Gly) (interchain with G-Cter in SUMO2). Position 1456 is a phosphoserine (Ser1456). The PHD-type 3 zinc-finger motif lies at 1484 to 1538 (DAICPAVSCLQPEGDEVDWVQCDGSCNQWFHQVCVGVSPEMAEKEDYICVRCTGK).

Belongs to the JARID1 histone demethylase family. As to quaternary structure, interacts with FOXG1B, PAX9, MYC, MYCN and RB1. Interacts with HDAC1, HDAC4, HDAC5 and HDAC7. Interacts (via PHD-type 1 zinc finger) with histone H3 unmodified at 'Lys-4'; the interaction is inhibited when histone H3 is methylated at 'Arg-2' or 'Lys-4'. Fe(2+) serves as cofactor. In terms of tissue distribution, present at highest levels in testis, where it is enriched in spermatogonia and pachytene cells (at protein level).

It is found in the nucleus. It carries out the reaction N(6),N(6),N(6)-trimethyl-L-lysyl(4)-[histone H3] + 3 2-oxoglutarate + 3 O2 = L-lysyl(4)-[histone H3] + 3 formaldehyde + 3 succinate + 3 CO2. Functionally, histone demethylase that demethylates 'Lys-4' of histone H3, thereby playing a central role in histone code. Does not demethylate histone H3 'Lys-9' or H3 'Lys-27'. Demethylates trimethylated, dimethylated and monomethylated H3 'Lys-4'. Acts as a transcriptional corepressor for FOXG1B and PAX9. Represses the CLOCK-BMAL1 heterodimer-mediated transcriptional activation of the core clock component PER2. This chain is Lysine-specific demethylase 5B (Kdm5b), found in Mus musculus (Mouse).